We begin with the raw amino-acid sequence, 129 residues long: Small ribosomal subunit protein uS11 (129 aa).

Belongs to the universal ribosomal protein uS11 family. As to quaternary structure, part of the 30S ribosomal subunit. Interacts with proteins S7 and S18. Binds to IF-3.

Its function is as follows. Located on the platform of the 30S subunit, it bridges several disparate RNA helices of the 16S rRNA. Forms part of the Shine-Dalgarno cleft in the 70S ribosome. The protein is Small ribosomal subunit protein uS11 of Limosilactobacillus reuteri (strain DSM 20016) (Lactobacillus reuteri).